The primary structure comprises 570 residues: Molecular chaperone MKKS (570 aa).

192–199 (GHIILGKS) contributes to the ATP binding site. Residues 198–370 (KSLIVPLKGQ…FHLIPNEATI (173 aa)) are substrate-binding apical domain.

It belongs to the TCP-1 chaperonin family. As to quaternary structure, component of a complex composed at least of MKKS, BBS10, BBS12, TCP1, CCT2, CCT3, CCT4, CCT5 and CCT8. Interacts with STUB1. Interacts with BBS2 (via coiled coil domain). Interacts with CCDC28B. Interacts with BBS12. Interacts with SMARCC1, a component of the SWI/SNF complexes; the interaction takes place predominantly in the cytoplasm and may modulate SMARCC1 location. Interacts with DLEC1.

Its subcellular location is the cytoplasm. The protein localises to the cytoskeleton. It is found in the microtubule organizing center. The protein resides in the centrosome. It localises to the cytosol. Its subcellular location is the nucleus. Its function is as follows. Probable molecular chaperone that assists the folding of proteins upon ATP hydrolysis. Plays a role in the assembly of BBSome, a complex involved in ciliogenesis regulating transports vesicles to the cilia. May play a role in protein processing in limb, cardiac and reproductive system development. May play a role in cytokinesis. The protein is Molecular chaperone MKKS (MKKS) of Pongo abelii (Sumatran orangutan).